The chain runs to 236 residues: Small ribosomal subunit protein uS2c (236 aa).

It belongs to the universal ribosomal protein uS2 family.

It localises to the plastid. It is found in the chloroplast. This is Small ribosomal subunit protein uS2c (rps2) from Calycanthus floridus var. glaucus (Eastern sweetshrub).